Reading from the N-terminus, the 506-residue chain is MPDTAPQLRLYNTLTRTKEAFAPIDAKNVRMYVCGPTVYDFAHIGNARPVIVFDVLFRLLRHVYGAQHVTYARNITDVDDKINARAARDYPDLPFNEAIRKVTESTNAQFQADVTALGNLQPTVQPRATEHMDEMRAMIDRLVQRGVAYVAQDHVLFSPSAMNARKGPRYGALARRSLDEMLAGARVDVASYKRDEMDFVLWKPSKKGEPGWPSPAGIETLGRPGWHIECSAMSMAKLLEPFGGGLKCDDPERNQFDIHGGGIDLVFPHHENEIAQSCCALGTERMANIWMHNGFLQVEGQKMSKSLGNFITIRDVLNDGLPQLGEWGDNTVRDRWAGLAARLSMLQTHYREPINWTAQRLAESADELHRWYGLLRDEGFGAPEKLSHASAVAAALCDDLNSWAAITALRQAFKVRDVAALGEGMALMGLLDPYFVTASDVPIFARADVDASAIAARIAERLNFINAKNWAEADRIRDELLQEGVQLKDSKDPATGERITTWDVVG.

C34 contacts Zn(2+). Positions 36 to 46 (PTVYDFAHIGN) match the 'HIGH' region motif. Residues C230, H269, and E273 each contribute to the Zn(2+) site. The 'KMSKS' region signature appears at 302–306 (KMSKS). K305 provides a ligand contact to ATP.

The protein belongs to the class-I aminoacyl-tRNA synthetase family. As to quaternary structure, monomer. Zn(2+) serves as cofactor.

It localises to the cytoplasm. It carries out the reaction tRNA(Cys) + L-cysteine + ATP = L-cysteinyl-tRNA(Cys) + AMP + diphosphate. This chain is Cysteine--tRNA ligase, found in Brucella suis biovar 1 (strain 1330).